Consider the following 336-residue polypeptide: tRNA N6-adenosine threonylcarbamoyltransferase (336 aa).

Residues H114 and H118 each coordinate Fe cation. Residues 136-140 (LVSGG), D169, G182, D186, and N275 contribute to the substrate site. Position 301 (D301) interacts with Fe cation.

It belongs to the KAE1 / TsaD family. Fe(2+) is required as a cofactor.

The protein localises to the cytoplasm. It carries out the reaction L-threonylcarbamoyladenylate + adenosine(37) in tRNA = N(6)-L-threonylcarbamoyladenosine(37) in tRNA + AMP + H(+). In terms of biological role, required for the formation of a threonylcarbamoyl group on adenosine at position 37 (t(6)A37) in tRNAs that read codons beginning with adenine. Is involved in the transfer of the threonylcarbamoyl moiety of threonylcarbamoyl-AMP (TC-AMP) to the N6 group of A37, together with TsaE and TsaB. TsaD likely plays a direct catalytic role in this reaction. This is tRNA N6-adenosine threonylcarbamoyltransferase from Streptococcus pneumoniae serotype 2 (strain D39 / NCTC 7466).